The following is a 336-amino-acid chain: tRNA N6-adenosine threonylcarbamoyltransferase (336 aa).

Fe cation contacts are provided by His-112 and His-116. Residues 136–140 (LVSGG), Asp-169, Gly-182, and Asn-276 contribute to the substrate site. Residue Asp-304 coordinates Fe cation.

Belongs to the KAE1 / TsaD family. The cofactor is Fe(2+).

It localises to the cytoplasm. It catalyses the reaction L-threonylcarbamoyladenylate + adenosine(37) in tRNA = N(6)-L-threonylcarbamoyladenosine(37) in tRNA + AMP + H(+). Required for the formation of a threonylcarbamoyl group on adenosine at position 37 (t(6)A37) in tRNAs that read codons beginning with adenine. Is involved in the transfer of the threonylcarbamoyl moiety of threonylcarbamoyl-AMP (TC-AMP) to the N6 group of A37, together with TsaE and TsaB. TsaD likely plays a direct catalytic role in this reaction. The chain is tRNA N6-adenosine threonylcarbamoyltransferase from Francisella philomiragia subsp. philomiragia (strain ATCC 25017 / CCUG 19701 / FSC 153 / O#319-036).